A 320-amino-acid polypeptide reads, in one-letter code: Transaldolase (320 aa).

Residue Lys-135 is the Schiff-base intermediate with substrate of the active site.

It belongs to the transaldolase family. Type 1 subfamily. Homodimer.

It is found in the cytoplasm. It carries out the reaction D-sedoheptulose 7-phosphate + D-glyceraldehyde 3-phosphate = D-erythrose 4-phosphate + beta-D-fructose 6-phosphate. It participates in carbohydrate degradation; pentose phosphate pathway; D-glyceraldehyde 3-phosphate and beta-D-fructose 6-phosphate from D-ribose 5-phosphate and D-xylulose 5-phosphate (non-oxidative stage): step 2/3. Its function is as follows. Transaldolase is important for the balance of metabolites in the pentose-phosphate pathway. This Colwellia psychrerythraea (strain 34H / ATCC BAA-681) (Vibrio psychroerythus) protein is Transaldolase.